The primary structure comprises 258 residues: MNKKIEELNKLDKKVVLAPMAGITDGDFCRKFKDLFAIVTIGGYNLDSATYKASRDIEKRGRKEFSINLEEFNSYIIEQIKKARESNALVSVNVRFVDIDEAYDKLLTIAKHADIIELNCHCRQPEITSLGIGQELMKNKNLLKEFLTKMKELNKPIFLKIRLNCIPLKELIDNLNYVRDYFDGLHVDCFYPGKPYADMDSLKILAEEFNDKIIIGNNSIDSIEKAKEMLKYSDFVSVARTILKGNVEWIKELNKENI.

This is an uncharacterized protein from Methanocaldococcus jannaschii (strain ATCC 43067 / DSM 2661 / JAL-1 / JCM 10045 / NBRC 100440) (Methanococcus jannaschii).